The sequence spans 133 residues: Profilin (133 aa).

This sequence belongs to the profilin family. In terms of assembly, interacts with host TPM1. Interacts with protein A25.

It is found in the host cytoplasm. Functionally, participates in either intracellular transport of viral proteins or intercellular spread of the virus. Cellular profilins modulate actin filament dynamics (polymerization and depolymerization) via direct binding to actin through an actin-binding domain as well as by modulation of other actin-binding proteins. In contrast to cellular homologs, the poxvirus profilins seem to bind actin only weakly. In Variola virus (isolate Human/India/Ind3/1967) (VARV), this protein is Profilin (OPG171).